We begin with the raw amino-acid sequence, 97 residues long: Putative pterin-4-alpha-carbinolamine dehydratase (97 aa).

Belongs to the pterin-4-alpha-carbinolamine dehydratase family.

The enzyme catalyses (4aS,6R)-4a-hydroxy-L-erythro-5,6,7,8-tetrahydrobiopterin = (6R)-L-erythro-6,7-dihydrobiopterin + H2O. This is Putative pterin-4-alpha-carbinolamine dehydratase from Dinoroseobacter shibae (strain DSM 16493 / NCIMB 14021 / DFL 12).